Here is a 387-residue protein sequence, read N- to C-terminus: Phosphoglycerate kinase (387 aa).

Substrate contacts are provided by residues 21-23 (DLN), R36, 59-62 (HLGR), R113, and R146. Residues K197, E314, and 340–343 (GGDT) contribute to the ATP site.

It belongs to the phosphoglycerate kinase family. Monomer.

It is found in the cytoplasm. The catalysed reaction is (2R)-3-phosphoglycerate + ATP = (2R)-3-phospho-glyceroyl phosphate + ADP. The protein operates within carbohydrate degradation; glycolysis; pyruvate from D-glyceraldehyde 3-phosphate: step 2/5. This is Phosphoglycerate kinase (pgk) from Vibrio cholerae serotype O1 (strain ATCC 39541 / Classical Ogawa 395 / O395).